The sequence spans 356 residues: Heat-inducible transcription repressor HrcA (356 aa).

Belongs to the HrcA family.

In terms of biological role, negative regulator of class I heat shock genes (grpE-dnaK-dnaJ and groELS operons). Prevents heat-shock induction of these operons. The polypeptide is Heat-inducible transcription repressor HrcA (Chelativorans sp. (strain BNC1)).